Here is a 118-residue protein sequence, read N- to C-terminus: MELGLSWIFLLAILKGVQCEVQLVESGGGLVQPGRSLRLSCAASGFTFDDYAMHWVRQAPGKGLEWVSGISWNSGSIGYADSVKGRFTISRDNAKNSLYLQMNSLRAEDTALYYCAKD.

The signal sequence occupies residues 1 to 19 (MELGLSWIFLLAILKGVQC). Residues 20-44 (EVQLVESGGGLVQPGRSLRLSCAAS) are framework-1. Residues 20–118 (EVQLVESGGG…DTALYYCAKD (99 aa)) form the Ig-like domain. Cys41 and Cys115 are joined by a disulfide. The complementarity-determining-1 stretch occupies residues 45–52 (GFTFDDYA). The framework-2 stretch occupies residues 53-69 (MHWVRQAPGKGLEWVSG). The segment at 70–77 (ISWNSGSI) is complementarity-determining-2. The interval 78 to 115 (GYADSVKGRFTISRDNAKNSLYLQMNSLRAEDTALYYC) is framework-3. The interval 116–118 (AKD) is complementarity-determining-3.

As to quaternary structure, immunoglobulins are composed of two identical heavy chains and two identical light chains; disulfide-linked.

The protein resides in the secreted. It localises to the cell membrane. Functionally, v region of the variable domain of immunoglobulin heavy chains that participates in the antigen recognition. Immunoglobulins, also known as antibodies, are membrane-bound or secreted glycoproteins produced by B lymphocytes. In the recognition phase of humoral immunity, the membrane-bound immunoglobulins serve as receptors which, upon binding of a specific antigen, trigger the clonal expansion and differentiation of B lymphocytes into immunoglobulins-secreting plasma cells. Secreted immunoglobulins mediate the effector phase of humoral immunity, which results in the elimination of bound antigens. The antigen binding site is formed by the variable domain of one heavy chain, together with that of its associated light chain. Thus, each immunoglobulin has two antigen binding sites with remarkable affinity for a particular antigen. The variable domains are assembled by a process called V-(D)-J rearrangement and can then be subjected to somatic hypermutations which, after exposure to antigen and selection, allow affinity maturation for a particular antigen. In Homo sapiens (Human), this protein is Immunoglobulin heavy variable 3-9.